Reading from the N-terminus, the 90-residue chain is DNA-binding protein HU (90 aa).

Positions 57–90 (ARKGVNPQTRKPITIPERKVPKFKPGKALKEKVK) are disordered.

Belongs to the bacterial histone-like protein family.

Functionally, histone-like DNA-binding protein which is capable of wrapping DNA to stabilize it, and thus to prevent its denaturation under extreme environmental conditions. This chain is DNA-binding protein HU (hup), found in Thermotoga maritima (strain ATCC 43589 / DSM 3109 / JCM 10099 / NBRC 100826 / MSB8).